The primary structure comprises 379 residues: Succinate--CoA ligase [ADP-forming] subunit beta (379 aa).

In terms of domain architecture, ATP-grasp spans 9–237; the sequence is RDILARYGIP…SSDEPEAEQR (229 aa). ATP-binding positions include Lys-45, 52–54, Ile-94, and Glu-99; that span reads GRG. Positions 192 and 206 each coordinate Mg(2+). Substrate contacts are provided by residues Asn-257 and 314–316; that span reads GIT.

This sequence belongs to the succinate/malate CoA ligase beta subunit family. As to quaternary structure, heterotetramer of two alpha and two beta subunits. Mg(2+) serves as cofactor.

The enzyme catalyses succinate + ATP + CoA = succinyl-CoA + ADP + phosphate. It catalyses the reaction GTP + succinate + CoA = succinyl-CoA + GDP + phosphate. It participates in carbohydrate metabolism; tricarboxylic acid cycle; succinate from succinyl-CoA (ligase route): step 1/1. In terms of biological role, succinyl-CoA synthetase functions in the citric acid cycle (TCA), coupling the hydrolysis of succinyl-CoA to the synthesis of either ATP or GTP and thus represents the only step of substrate-level phosphorylation in the TCA. The beta subunit provides nucleotide specificity of the enzyme and binds the substrate succinate, while the binding sites for coenzyme A and phosphate are found in the alpha subunit. In Roseiflexus sp. (strain RS-1), this protein is Succinate--CoA ligase [ADP-forming] subunit beta.